The sequence spans 315 residues: Methionyl-tRNA formyltransferase (315 aa).

Residues 2–189 (SESLRIIFAG…LITTLKQLAD (188 aa)) form an N-terminal domain region. 113 to 116 (SLLP) contacts (6S)-5,6,7,8-tetrahydrofolate. Residues 210–315 (KEEARIDWSL…EWFVPGNRLV (106 aa)) are C-terminal domain.

Belongs to the Fmt family.

It catalyses the reaction L-methionyl-tRNA(fMet) + (6R)-10-formyltetrahydrofolate = N-formyl-L-methionyl-tRNA(fMet) + (6S)-5,6,7,8-tetrahydrofolate + H(+). Attaches a formyl group to the free amino group of methionyl-tRNA(fMet). The formyl group appears to play a dual role in the initiator identity of N-formylmethionyl-tRNA by promoting its recognition by IF2 and preventing the misappropriation of this tRNA by the elongation apparatus. This chain is Methionyl-tRNA formyltransferase, found in Escherichia coli O157:H7.